An 81-amino-acid chain; its full sequence is RNA-binding protein Hfq (81 aa).

In terms of domain architecture, Sm spans 9–68 (DPFLNVLRRERVPVFIYLINGIKLQGEIESFDKFVILLRNTVNQMIYKHAISTIVPSRVV).

The protein belongs to the Hfq family. As to quaternary structure, homohexamer.

Functionally, RNA chaperone that binds small regulatory RNA (sRNAs) and mRNAs to facilitate mRNA translational regulation in response to envelope stress, environmental stress and changes in metabolite concentrations. Also binds with high specificity to tRNAs. In Blochmanniella pennsylvanica (strain BPEN), this protein is RNA-binding protein Hfq.